The primary structure comprises 98 residues: Cell cycle protein GpsB (98 aa).

Residues 34–72 (LDMVIKDYEAFHQEIEELQQENLQLKKQLEEANKRQPAQ) are a coiled coil.

Belongs to the GpsB family. In terms of assembly, forms polymers through the coiled coil domains. Interacts with PBP1, MreC and EzrA.

The protein resides in the cytoplasm. Functionally, divisome component that associates with the complex late in its assembly, after the Z-ring is formed, and is dependent on DivIC and PBP2B for its recruitment to the divisome. Together with EzrA, is a key component of the system that regulates PBP1 localization during cell cycle progression. Its main role could be the removal of PBP1 from the cell pole after pole maturation is completed. Also contributes to the recruitment of PBP1 to the division complex. Not essential for septum formation. This chain is Cell cycle protein GpsB, found in Bacillus licheniformis (strain ATCC 14580 / DSM 13 / JCM 2505 / CCUG 7422 / NBRC 12200 / NCIMB 9375 / NCTC 10341 / NRRL NRS-1264 / Gibson 46).